Consider the following 512-residue polypeptide: Vacuolar protein sorting-associated protein 30 (512 aa).

The BARA stretch occupies residues 294–511 (TNIYNESFRI…LVFCSSKLSL (218 aa)).

It belongs to the beclin family. As to quaternary structure, component of the autophagy-specific VPS34 PI3-kinase complex I composed of VPS15, VPS30, VPS34, ATG14 and ATG38; and of the VPS34 PI3-kinase complex II composed of VPS15, VPS30, VPS34 and VPS38.

Its subcellular location is the endosome membrane. It is found in the vacuole membrane. The protein resides in the preautophagosomal structure membrane. Functionally, required for cytoplasm to vacuole transport (Cvt), autophagy, nucleophagy, and mitophagy, as a part of the autophagy-specific VPS34 PI3-kinase complex I. This complex is essential to recruit the ATG8-phosphatidylinositol conjugate and the ATG12-ATG5 conjugate to the pre-autophagosomal structure. Also involved in endosome-to-Golgi retrograde transport as part of the VPS34 PI3-kinase complex II. This second complex is required for the endosome-to-Golgi retrieval of PEP1 and KEX2, and the recruitment of VPS5 and VPS7, two components of the retromer complex, to endosomal membranes (probably through the synthesis of a specific pool of phosphatidylinositol 3-phosphate recruiting the retromer to the endosomes). Required for survival and/or proliferation in kidneys but not brain. The sequence is that of Vacuolar protein sorting-associated protein 30 from Candida glabrata (strain ATCC 2001 / BCRC 20586 / JCM 3761 / NBRC 0622 / NRRL Y-65 / CBS 138) (Yeast).